The primary structure comprises 139 residues: D-ribose pyranase (139 aa).

The Proton donor role is filled by H20. Residues D28, H106, and 128–130 (YAN) each bind substrate.

The protein belongs to the RbsD / FucU family. RbsD subfamily. In terms of assembly, homodecamer.

It localises to the cytoplasm. The enzyme catalyses beta-D-ribopyranose = beta-D-ribofuranose. It participates in carbohydrate metabolism; D-ribose degradation; D-ribose 5-phosphate from beta-D-ribopyranose: step 1/2. Catalyzes the interconversion of beta-pyran and beta-furan forms of D-ribose. This is D-ribose pyranase from Aliivibrio fischeri (strain MJ11) (Vibrio fischeri).